Here is a 336-residue protein sequence, read N- to C-terminus: Holliday junction branch migration complex subunit RuvB (336 aa).

Residues 1 to 182 (MKERIVNLET…FGMSFRMQFY (182 aa)) are large ATPase domain (RuvB-L). Residues leucine 21, arginine 22, glycine 63, lysine 66, threonine 67, serine 68, 129-131 (EDF), arginine 172, tyrosine 182, and arginine 219 contribute to the ATP site. Threonine 67 lines the Mg(2+) pocket. Residues 183–253 (NPSELALIIK…ITLHALNELG (71 aa)) are small ATPAse domain (RuvB-S). Residues 256-336 (ELGFDEADLA…IPTLNPQTLF (81 aa)) are head domain (RuvB-H). DNA contacts are provided by arginine 310 and arginine 315.

Belongs to the RuvB family. Homohexamer. Forms an RuvA(8)-RuvB(12)-Holliday junction (HJ) complex. HJ DNA is sandwiched between 2 RuvA tetramers; dsDNA enters through RuvA and exits via RuvB. An RuvB hexamer assembles on each DNA strand where it exits the tetramer. Each RuvB hexamer is contacted by two RuvA subunits (via domain III) on 2 adjacent RuvB subunits; this complex drives branch migration. In the full resolvosome a probable DNA-RuvA(4)-RuvB(12)-RuvC(2) complex forms which resolves the HJ.

Its subcellular location is the cytoplasm. It carries out the reaction ATP + H2O = ADP + phosphate + H(+). Its function is as follows. The RuvA-RuvB-RuvC complex processes Holliday junction (HJ) DNA during genetic recombination and DNA repair, while the RuvA-RuvB complex plays an important role in the rescue of blocked DNA replication forks via replication fork reversal (RFR). RuvA specifically binds to HJ cruciform DNA, conferring on it an open structure. The RuvB hexamer acts as an ATP-dependent pump, pulling dsDNA into and through the RuvAB complex. RuvB forms 2 homohexamers on either side of HJ DNA bound by 1 or 2 RuvA tetramers; 4 subunits per hexamer contact DNA at a time. Coordinated motions by a converter formed by DNA-disengaged RuvB subunits stimulates ATP hydrolysis and nucleotide exchange. Immobilization of the converter enables RuvB to convert the ATP-contained energy into a lever motion, pulling 2 nucleotides of DNA out of the RuvA tetramer per ATP hydrolyzed, thus driving DNA branch migration. The RuvB motors rotate together with the DNA substrate, which together with the progressing nucleotide cycle form the mechanistic basis for DNA recombination by continuous HJ branch migration. Branch migration allows RuvC to scan DNA until it finds its consensus sequence, where it cleaves and resolves cruciform DNA. The polypeptide is Holliday junction branch migration complex subunit RuvB (Helicobacter pylori (strain ATCC 700392 / 26695) (Campylobacter pylori)).